Reading from the N-terminus, the 308-residue chain is Staphylococcal superantigen-like 4 (308 aa).

The signal sequence occupies residues 1 to 30 (MKITTIAKTSLALGLLTTGVITTTTQAANA). A disordered region spans residues 28 to 117 (ANATTPSSTK…TTKQVPTEIN (90 aa)). Composition is skewed to polar residues over residues 33–47 (PSSTKVEAPQSTPPS) and 55–76 (SKPNATTPPSTKVEAPQQTANA). A compositionally biased stretch (low complexity) spans 77-93 (TTPPSTKVTTPPSTNTP). Polar residues predominate over residues 94–114 (QPMQSTKSDTPQSPTTKQVPT). Residues 180–278 (VDVFVVLEEN…VIKMKNGGKY (99 aa)) form a sialyl Lewis X-binding region.

Belongs to the staphylococcal/streptococcal toxin family.

It localises to the secreted. In terms of biological role, secreted protein that plays a role in immune innate response inhibition by interfering with host TLR2-mediated pathway. In Staphylococcus aureus (strain Newman), this protein is Staphylococcal superantigen-like 4.